The following is an 852-amino-acid chain: Major vault protein (852 aa).

9 MVP repeats span residues 2–54 (EDSI…IPPR), 55–109 (HYCV…VATA), 110–161 (LQVV…CWIN), 162–214 (AIVI…DVVN), 215–269 (AFIL…GQVE), 270–320 (VTTL…IQDT), 321–377 (YVLS…YRHA), 378–457 (IPLD…PTRV), and 458–520 (VTFR…LLGP).

The vault ribonucleoprotein particle is a huge (400 A x 670 A) cage structure of 12.9 MDa. It consists of a dimer of half-vaults, with each half-vault comprising 39 identical major vault protein (MVP) chains, PARP4 and one or more vault RNAs (vRNAs). As to expression, expression is highest in brain and enriched in the electric lobe. Closely associated with synaptic vesicles in the nerve terminals of the electric organ.

Its subcellular location is the cytoplasm. It is found in the nucleus. Required for normal vault structure. Vaults are multi-subunit structures that may act as scaffolds for proteins involved in signal transduction. Vaults may also play a role in nucleo-cytoplasmic transport. The chain is Major vault protein (MVP) from Diplobatis ommata (Ocellated electric ray).